Reading from the N-terminus, the 183-residue chain is Translation initiation factor IF-3 (183 aa).

Belongs to the IF-3 family. In terms of assembly, monomer.

It is found in the cytoplasm. Functionally, IF-3 binds to the 30S ribosomal subunit and shifts the equilibrium between 70S ribosomes and their 50S and 30S subunits in favor of the free subunits, thus enhancing the availability of 30S subunits on which protein synthesis initiation begins. The protein is Translation initiation factor IF-3 of Pseudomonas putida (strain W619).